Reading from the N-terminus, the 396-residue chain is MTVQTIRDFLKLESASGLLLIGAMLLAVLCANTPLSWLYDGFLQTRFEIHFGALSLAKPLLLWINDGLMAIFFLLVGLEVKREILEGELSSLPQIALPGIAAVGGMLVPALIYTGINWSAPATLQGWAIPAATDIAFALGVIALLGKNVPGPLKLFLLTLAILDDLGAIVIIALFYTADLSVLSLVLAMIAVAGLFILNRTGVTHIAAYVLLGVFLWICVLKSGVHATLAGVVLAFAIPLRTKDQDGHSLLRHLEHTLHPWVAYGILPIFAFANAGVSLAGISFTDVFSPLPLGIAAGLFVGKQFGIVVFSWIGVKLRMARLPQGVSWGEFHGMAVLCGIGFTMSLFIATLALDGSQETADAARLGVLLGSLMSALSGYYLLKRAVRKRALRAEAP.

The next 11 membrane-spanning stretches (helical) occupy residues 18 to 38 (LLLI…LSWL), 60 to 80 (LLLW…GLEV), 95 to 115 (IALP…IYTG), 126 to 146 (GWAI…ALLG), 155 to 175 (LFLL…IALF), 178 to 198 (ADLS…LFIL), 201 to 221 (TGVT…ICVL), 262 to 282 (VAYG…LAGI), 295 to 315 (IAAG…WIGV), 333 to 353 (GMAV…TLAL), and 362 to 382 (AARL…YYLL).

The protein belongs to the NhaA Na(+)/H(+) (TC 2.A.33) antiporter family.

It localises to the cell inner membrane. It carries out the reaction Na(+)(in) + 2 H(+)(out) = Na(+)(out) + 2 H(+)(in). Functionally, na(+)/H(+) antiporter that extrudes sodium in exchange for external protons. The protein is Na(+)/H(+) antiporter NhaA 1 of Syntrophotalea carbinolica (strain DSM 2380 / NBRC 103641 / GraBd1) (Pelobacter carbinolicus).